The chain runs to 346 residues: Methylthioribose-1-phosphate isomerase (346 aa).

Residues Arg46–Ala48, Arg89, and Gln196 contribute to the substrate site. Asp237 serves as the catalytic Proton donor. Asn247–Lys248 is a binding site for substrate.

The protein belongs to the eIF-2B alpha/beta/delta subunits family. MtnA subfamily.

The enzyme catalyses 5-(methylsulfanyl)-alpha-D-ribose 1-phosphate = 5-(methylsulfanyl)-D-ribulose 1-phosphate. It participates in amino-acid biosynthesis; L-methionine biosynthesis via salvage pathway; L-methionine from S-methyl-5-thio-alpha-D-ribose 1-phosphate: step 1/6. Its function is as follows. Catalyzes the interconversion of methylthioribose-1-phosphate (MTR-1-P) into methylthioribulose-1-phosphate (MTRu-1-P). This chain is Methylthioribose-1-phosphate isomerase, found in Geobacter metallireducens (strain ATCC 53774 / DSM 7210 / GS-15).